A 371-amino-acid chain; its full sequence is uncharacterized protein (371 aa).

It belongs to the glycerate kinase type-1 family.

This is an uncharacterized protein from Synechocystis sp. (strain ATCC 27184 / PCC 6803 / Kazusa).